Reading from the N-terminus, the 863-residue chain is Eukaryotic translation initiation factor 3 subunit C (863 aa).

Positions 1-92 (MSRFFRGGDD…VKSAKDKRFD (92 aa)) are disordered. Over residues 16–53 (SSDEEELYSTSEEEEEEDQDQEESSEEEDEEESSDEDE) the composition is skewed to acidic residues. Basic and acidic residues predominate over residues 79–92 (GATKVKSAKDKRFD). Residues 604–778 (FHMHINLELL…KTVIFRKGVE (175 aa)) enclose the PCI domain. Residues 808–863 (TQGSANAFSRKDGRQGGQRGGGQRSGRGGARAGGNAQRQAGGTQFTGGALGAAVRG) form a disordered region. A compositionally biased stretch (gly residues) spans 822–839 (QGGQRGGGQRSGRGGARA). Over residues 840 to 850 (GGNAQRQAGGT) the composition is skewed to low complexity.

It belongs to the eIF-3 subunit C family. Component of the eukaryotic translation initiation factor 3 (eIF-3) complex.

It is found in the cytoplasm. Its function is as follows. Component of the eukaryotic translation initiation factor 3 (eIF-3) complex, which is involved in protein synthesis of a specialized repertoire of mRNAs and, together with other initiation factors, stimulates binding of mRNA and methionyl-tRNAi to the 40S ribosome. The eIF-3 complex specifically targets and initiates translation of a subset of mRNAs involved in cell proliferation. The protein is Eukaryotic translation initiation factor 3 subunit C of Chaetomium globosum (strain ATCC 6205 / CBS 148.51 / DSM 1962 / NBRC 6347 / NRRL 1970) (Soil fungus).